The chain runs to 474 residues: Iroquois-class homeodomain protein IRX-2 (474 aa).

A DNA-binding region (homeobox; TALE-type) is located at residues 115 to 177 (DPAYRKNATR…NARRRLKKEN (63 aa)). 3 disordered regions span residues 177-220 (NKMT…EDEG), 262-373 (EDLE…PGGS), and 420-461 (PGET…DTSE). A Phosphoserine modification is found at Ser-187. Residues 196 to 210 (DASRSKEESSDKAQD) are compositionally biased toward basic and acidic residues. The span at 262 to 275 (EDLEDEEDEEDECE) shows a compositional bias: acidic residues. Composition is skewed to low complexity over residues 293–305 (EAPL…EAAP) and 358–373 (PAAA…PGGS).

Belongs to the TALE/IRO homeobox family. Expressed in specific and overlapping patterns with Irx1 and Irx3 in the developing and adult metanephric kidney. In the adult metanephros, renal expression is found in the loop of Henle in the S3 proximal tubule segment and in the thick ascending limb (TAL) of the distal tubule.

It localises to the nucleus. The chain is Iroquois-class homeodomain protein IRX-2 (Irx2) from Mus musculus (Mouse).